The chain runs to 59 residues: Small ribosomal subunit protein bS21 (59 aa).

Residues 32–42 are compositionally biased toward basic and acidic residues; sequence VRKREHYDKPS. Positions 32 to 59 are disordered; that stretch reads VRKREHYDKPSVKRKKKAEAARRKNAKK. Basic residues predominate over residues 43 to 59; the sequence is VKRKKKAEAARRKNAKK.

This sequence belongs to the bacterial ribosomal protein bS21 family.

This is Small ribosomal subunit protein bS21 from Clostridioides difficile (strain 630) (Peptoclostridium difficile).